Consider the following 407-residue polypeptide: Imidazolonepropionase (407 aa).

Fe(3+) is bound by residues histidine 68 and histidine 70. The Zn(2+) site is built by histidine 68 and histidine 70. Arginine 77, tyrosine 140, and histidine 173 together coordinate 4-imidazolone-5-propanoate. Tyrosine 140 provides a ligand contact to N-formimidoyl-L-glutamate. A Fe(3+)-binding site is contributed by histidine 236. Zn(2+) is bound at residue histidine 236. Glutamine 239 contributes to the 4-imidazolone-5-propanoate binding site. Aspartate 311 contributes to the Fe(3+) binding site. Aspartate 311 contacts Zn(2+). Residues asparagine 313 and glycine 315 each coordinate N-formimidoyl-L-glutamate. Threonine 316 contributes to the 4-imidazolone-5-propanoate binding site.

This sequence belongs to the metallo-dependent hydrolases superfamily. HutI family. Zn(2+) is required as a cofactor. It depends on Fe(3+) as a cofactor.

The protein localises to the cytoplasm. It carries out the reaction 4-imidazolone-5-propanoate + H2O = N-formimidoyl-L-glutamate. Its pathway is amino-acid degradation; L-histidine degradation into L-glutamate; N-formimidoyl-L-glutamate from L-histidine: step 3/3. In terms of biological role, catalyzes the hydrolytic cleavage of the carbon-nitrogen bond in imidazolone-5-propanoate to yield N-formimidoyl-L-glutamate. It is the third step in the universal histidine degradation pathway. The sequence is that of Imidazolonepropionase from Stenotrophomonas maltophilia (strain R551-3).